We begin with the raw amino-acid sequence, 99 residues long: HssA/B-like protein 41 (99 aa).

The tract at residues 1–29 (MTLFSSISSISNPMTSSKSSISSFGSGTS) is disordered.

The protein belongs to the hssA/B family.

In Dictyostelium discoideum (Social amoeba), this protein is HssA/B-like protein 41 (hssl41).